Consider the following 221-residue polypeptide: 2,3-bisphosphoglycerate-dependent phosphoglycerate mutase (221 aa).

Residues 8–15 (RHGNSLWN), 21–22 (TG), Arg-60, 87–90 (ERHY), Lys-98, 114–115 (RR), and 174–175 (GN) contribute to the substrate site. The Tele-phosphohistidine intermediate role is filled by His-9. The Proton donor/acceptor role is filled by Glu-87. The interval 114-140 (RRGYDTPPPPLHSQADDPRYEEPPPLS) is disordered.

Belongs to the phosphoglycerate mutase family. BPG-dependent PGAM subfamily.

It carries out the reaction (2R)-2-phosphoglycerate = (2R)-3-phosphoglycerate. It participates in carbohydrate degradation; glycolysis; pyruvate from D-glyceraldehyde 3-phosphate: step 3/5. Functionally, catalyzes the interconversion of 2-phosphoglycerate and 3-phosphoglycerate. The protein is 2,3-bisphosphoglycerate-dependent phosphoglycerate mutase of Tropheryma whipplei (strain TW08/27) (Whipple's bacillus).